A 92-amino-acid polypeptide reads, in one-letter code: Defensin-like protein 294 (92 aa).

A signal peptide spans 1–26 (MASRATSLFIFFFLISCTFMLLETNA). 3 disulfide bridges follow: C63–C82, C69–C87, and C75–C89.

This sequence belongs to the DEFL family.

Its subcellular location is the secreted. The polypeptide is Defensin-like protein 294 (Arabidopsis thaliana (Mouse-ear cress)).